We begin with the raw amino-acid sequence, 94 residues long: Translation initiation factor 1A 2 (94 aa).

The S1-like domain maps to 6–80 (GRRNLRMPND…EKANVEWRYS (75 aa)).

This sequence belongs to the eIF-1A family.

In terms of biological role, seems to be required for maximal rate of protein biosynthesis. Enhances ribosome dissociation into subunits and stabilizes the binding of the initiator Met-tRNA(I) to 40 S ribosomal subunits. This chain is Translation initiation factor 1A 2 (eIF1A2), found in Halobacterium salinarum (strain ATCC 700922 / JCM 11081 / NRC-1) (Halobacterium halobium).